A 161-amino-acid chain; its full sequence is Copper transporter 1 (161 aa).

The next 2 membrane-spanning stretches (helical) occupy residues 55 to 75 and 109 to 129; these read GGMY…VEFL and VAYL…LVAV.

Belongs to the copper transporter (Ctr) (TC 1.A.56) family. SLC31A subfamily. In terms of assembly, self-interacts. Interacts with SWEET11 and COPT2.

The protein localises to the cell membrane. Functionally, involved in the transport of copper, in cooperation with SWEET11 and COPT2. Contributes to the removal of copper (Cu) from xylem, and thus to the sensitivity toward bacterial pathogens such as X.oryzae pv. oryzae (Xoo). In Oryza sativa subsp. japonica (Rice), this protein is Copper transporter 1 (COPT1).